The primary structure comprises 529 residues: Zinc finger CCCH domain-containing protein 65 (529 aa).

Residues 1-10 (MADADARAPP) show a composition bias toward basic and acidic residues. 2 disordered regions span residues 1 to 36 (MADA…EDEV) and 134 to 179 (PARK…GSYV). A compositionally biased stretch (low complexity) spans 14 to 31 (PGATPIGSISPSSAAPAA). 3 consecutive C3H1-type zinc fingers follow at residues 108-136 (RPGE…HPAR), 237-265 (GSSQ…HRDG), and 285-313 (RPGE…HPDP). The segment at 313-347 (PSNVASKDPQLEHENGDAPQQDVQGSSSQPNASIW) is disordered. Over residues 333-344 (QDVQGSSSQPNA) the composition is skewed to polar residues. 2 consecutive C3H1-type zinc fingers follow at residues 433–461 (RPGQ…HPRS) and 477–505 (KPDQ…HPFN).

The polypeptide is Zinc finger CCCH domain-containing protein 65 (Oryza sativa subsp. japonica (Rice)).